Consider the following 215-residue polypeptide: Cytochrome b6 (215 aa).

Residues 32-52 (IFYCLGGITLVCFLIQFATGF) traverse the membrane as a helical segment. Residue Cys-35 participates in heme c binding. Residues His-86 and His-100 each coordinate heme b. 3 consecutive transmembrane segments (helical) span residues 90-110 (ASMM…TGGF), 116-136 (LTWV…VTGY), and 186-206 (AHTF…FLMI). 2 residues coordinate heme b: His-187 and His-202.

Belongs to the cytochrome b family. PetB subfamily. As to quaternary structure, the 4 large subunits of the cytochrome b6-f complex are cytochrome b6, subunit IV (17 kDa polypeptide, PetD), cytochrome f and the Rieske protein, while the 4 small subunits are PetG, PetL, PetM and PetN. The complex functions as a dimer. Heme b serves as cofactor. Requires heme c as cofactor.

It localises to the cellular thylakoid membrane. Functionally, component of the cytochrome b6-f complex, which mediates electron transfer between photosystem II (PSII) and photosystem I (PSI), cyclic electron flow around PSI, and state transitions. The polypeptide is Cytochrome b6 (Nostoc punctiforme (strain ATCC 29133 / PCC 73102)).